We begin with the raw amino-acid sequence, 270 residues long: Putative phosphoenolpyruvate synthase regulatory protein (270 aa).

150 to 157 (GVSRCGKT) is an ADP binding site.

The protein belongs to the pyruvate, phosphate/water dikinase regulatory protein family. PSRP subfamily.

It carries out the reaction [pyruvate, water dikinase] + ADP = [pyruvate, water dikinase]-phosphate + AMP + H(+). The catalysed reaction is [pyruvate, water dikinase]-phosphate + phosphate + H(+) = [pyruvate, water dikinase] + diphosphate. In terms of biological role, bifunctional serine/threonine kinase and phosphorylase involved in the regulation of the phosphoenolpyruvate synthase (PEPS) by catalyzing its phosphorylation/dephosphorylation. The polypeptide is Putative phosphoenolpyruvate synthase regulatory protein (Aeromonas hydrophila subsp. hydrophila (strain ATCC 7966 / DSM 30187 / BCRC 13018 / CCUG 14551 / JCM 1027 / KCTC 2358 / NCIMB 9240 / NCTC 8049)).